We begin with the raw amino-acid sequence, 120 residues long: Large ribosomal subunit protein uL18 (120 aa).

This sequence belongs to the universal ribosomal protein uL18 family. Part of the 50S ribosomal subunit; part of the 5S rRNA/L5/L18/L25 subcomplex. Contacts the 5S and 23S rRNAs.

In terms of biological role, this is one of the proteins that bind and probably mediate the attachment of the 5S RNA into the large ribosomal subunit, where it forms part of the central protuberance. The chain is Large ribosomal subunit protein uL18 from Agrobacterium fabrum (strain C58 / ATCC 33970) (Agrobacterium tumefaciens (strain C58)).